A 183-amino-acid polypeptide reads, in one-letter code: NEDD8-conjugating enzyme Ubc12 (183 aa).

N-acetylmethionine is present on methionine 1. The segment at 1–29 (MIKLFSLKQQKKEEESAGGTKGSSKKASA) is disordered. The interaction with UBA3 stretch occupies residues 1–57 (MIKLFSLKQQKKEEESAGGTKGSSKKASAAQLRIQKDINELNLPKTCDISFSDPDDL). Position 3 is an N6-acetyllysine (lysine 3). Positions 29 to 173 (AAQLRIQKDI…VQRSMRGGYI (145 aa)) constitute a UBC core domain. Serine 50 carries the post-translational modification Phosphoserine. Cysteine 111 acts as the Glycyl thioester intermediate in catalysis. Residue arginine 169 is modified to Asymmetric dimethylarginine; alternate. Residue arginine 169 is modified to Omega-N-methylarginine; alternate.

Belongs to the ubiquitin-conjugating enzyme family. UBC12 subfamily. Interacts with UBA3 and RBX1. Interacts (N-terminally acetylated form) with (via DCUN1 domain) DCUN1D1, DCUN1D2, DCUN1D3, DCUN1D4 and DCUN1D5. The acetylation of Met-1 increases affinity for DCUN1D1 by about 2 orders of magnitude and is crucial for NEDD8 transfer to cullins.

It carries out the reaction [E1 NEDD8-activating enzyme]-S-[NEDD8 protein]-yl-L-cysteine + [E2 NEDD8-conjugating enzyme]-L-cysteine = [E1 NEDD8-activating enzyme]-L-cysteine + [E2 NEDD8-conjugating enzyme]-S-[NEDD8-protein]-yl-L-cysteine.. It participates in protein modification; protein neddylation. Its function is as follows. Accepts the ubiquitin-like protein NEDD8 from the UBA3-NAE1 E1 complex and catalyzes its covalent attachment to other proteins. The specific interaction with the E3 ubiquitin ligase RBX1, but not RBX2, suggests that the RBX1-UBE2M complex neddylates specific target proteins, such as CUL1, CUL2, CUL3 and CUL4. Involved in cell proliferation. The protein is NEDD8-conjugating enzyme Ubc12 (Ube2m) of Mus musculus (Mouse).